Reading from the N-terminus, the 93-residue chain is Large ribosomal subunit protein bL27 (93 aa).

The tract at residues 1 to 22 is disordered; that stretch reads MAHKKAGGSSRNGRDSAGRRLG.

This sequence belongs to the bacterial ribosomal protein bL27 family.

The protein is Large ribosomal subunit protein bL27 of Parvibaculum lavamentivorans (strain DS-1 / DSM 13023 / NCIMB 13966).